The sequence spans 1193 residues: Chloride channel protein 2 (1193 aa).

Residues 1-168 are Cytoplasmic-facing; sequence MVYFGDRQRD…WIWRHTVARL (168 aa). The disordered stretch occupies residues 76 to 97; sequence SHAFYPCPPPAENARDSDSSDD. A run of 2 helical transmembrane segments spans residues 169–204 and 213–236; these read GEDW…IWLY and VQYI…VHLI. The Selectivity filter part_1 motif lies at 242 to 246; that stretch reads GSGIP. Ser243 contacts chloride. Residues 245-252 constitute an intramembrane region (helical); the sequence is IPEMKTIL. A run of 2 helical transmembrane segments spans residues 261–279 and 286–304; these read LTFK…TLGS and EGPF…SKLV. The Selectivity filter part_2 signature appears at 284–288; the sequence is GKEGP. Intramembrane regions (helical) lie at residues 320–332 and 336–344; these read MLAA…VGAC and PVGGVLFSI. The next 5 membrane-spanning stretches (helical) occupy residues 356–373, 402–430, 439–458, 511–530, and 536–555; these read YWRG…FRLL, LFVF…VLFM, FLQK…VSSI, FGNL…IAST, and GMFI…VGEF. Positions 536-540 match the Selectivity filter part_3 motif; the sequence is GMFIP. Phe538 lines the chloride pocket. The helical intramembrane region spans 576 to 590; that stretch reads GGYAVVGAAAFSGSV. Positions 591–592 form an intramembrane region, note=Loop between two helices; the sequence is TH. The helical intramembrane region spans 593–604; it reads TVSVAVIIFEMT. An intramembrane region (note=Loop between two helices) is located at residues 605–609; that stretch reads GQITH. A helical membrane pass occupies residues 610 to 626; that stretch reads VVPVMIAVLVANAVAAL. At 627–1193 the chain is on the cytoplasmic side; the sequence is LQPSIYDSII…KSNTENGNHA (567 aa). Position 632 (Tyr632) interacts with chloride. Residues 663 to 723 form the CBS 1 domain; that stretch reads MVRDVKYIWH…KMIEKHIGRE (61 aa). Disordered stretches follow at residues 848 to 884, 1103 to 1122, and 1159 to 1193; these read TLQD…VSKK, NSFV…AVEK, and IKHT…GNHA. Residues 1048–1105 enclose the CBS 2 domain; the sequence is IDPSPFQLVERTSILKVHSLFSMVGINHAYVTKIGRLVGVVGLKELRKAIEDINSNSF. Over residues 1165–1193 the composition is skewed to polar residues; it reads GTVSLTMPPQESKQSPSADKSNTENGNHA.

This sequence belongs to the chloride channel (TC 2.A.49) family. As to expression, at embryonic stages 13-16, expressed in a subset of the midline cells of the midline primordium and in all of the midline glia. Expressed along the Z-line of the sarcomere in larval longitudinal muscles.

The protein resides in the membrane. Its function is as follows. Voltage-gated chloride channel. Chloride channels have several functions including the regulation of cell volume; membrane potential stabilization, signal transduction and transepithelial transport. This is Chloride channel protein 2 (ClC-a) from Drosophila melanogaster (Fruit fly).